Reading from the N-terminus, the 103-residue chain is Large ribosomal subunit protein eL14 (103 aa).

This sequence belongs to the eukaryotic ribosomal protein eL14 family.

The sequence is that of Large ribosomal subunit protein eL14 from Pyrobaculum arsenaticum (strain DSM 13514 / JCM 11321 / PZ6).